The following is a 192-amino-acid chain: Probable GTP-binding protein EngB (192 aa).

One can recognise an EngB-type G domain in the interval 22–192 (GRPEIVFVGR…LLASIDTFTQ (171 aa)). GTP contacts are provided by residues 30–37 (GRSNVGKS), 57–61 (GKTRL), 75–78 (DLPG), 142–145 (TKWD), and 172–174 (YSS). Mg(2+)-binding residues include Ser37 and Thr59.

It belongs to the TRAFAC class TrmE-Era-EngA-EngB-Septin-like GTPase superfamily. EngB GTPase family. The cofactor is Mg(2+).

Functionally, necessary for normal cell division and for the maintenance of normal septation. The sequence is that of Probable GTP-binding protein EngB from Chlorobaculum tepidum (strain ATCC 49652 / DSM 12025 / NBRC 103806 / TLS) (Chlorobium tepidum).